We begin with the raw amino-acid sequence, 444 residues long: Ribosomal protein uS12 methylthiotransferase RimO (444 aa).

The region spanning 2–118 (LKIALESLGC…IDKILKELSE (117 aa)) is the MTTase N-terminal domain. 6 residues coordinate [4Fe-4S] cluster: Cys11, Cys47, Cys81, Cys155, Cys159, and Cys162. The 231-residue stretch at 141 to 371 (STPSYMAYLK…MMIQQKISEE (231 aa)) folds into the Radical SAM core domain. One can recognise a TRAM domain in the interval 374-441 (DKKIGKTYEV…EYDLMGDVLY (68 aa)).

The protein belongs to the methylthiotransferase family. RimO subfamily. It depends on [4Fe-4S] cluster as a cofactor.

Its subcellular location is the cytoplasm. The enzyme catalyses L-aspartate(89)-[ribosomal protein uS12]-hydrogen + (sulfur carrier)-SH + AH2 + 2 S-adenosyl-L-methionine = 3-methylsulfanyl-L-aspartate(89)-[ribosomal protein uS12]-hydrogen + (sulfur carrier)-H + 5'-deoxyadenosine + L-methionine + A + S-adenosyl-L-homocysteine + 2 H(+). In terms of biological role, catalyzes the methylthiolation of an aspartic acid residue of ribosomal protein uS12. The chain is Ribosomal protein uS12 methylthiotransferase RimO from Clostridioides difficile (strain 630) (Peptoclostridium difficile).